We begin with the raw amino-acid sequence, 1063 residues long: Exportin-T (1063 aa).

It belongs to the exportin family.

The protein resides in the nucleus. It is found in the cytoplasm. Functionally, tRNA nucleus export receptor which facilitates tRNA translocation across the nuclear pore complex. Involved in pre-tRNA splicing, probably by affecting the interaction of pre-tRNA with splicing endonuclease. This is Exportin-T (LOS1) from Kluyveromyces lactis (strain ATCC 8585 / CBS 2359 / DSM 70799 / NBRC 1267 / NRRL Y-1140 / WM37) (Yeast).